The following is a 349-amino-acid chain: Protein-glutamate methylesterase/protein-glutamine glutaminase (349 aa).

The 118-residue stretch at 5–122 folds into the Response regulatory domain; the sequence is KVLVVDDSAF…SLDLYKVKDE (118 aa). The residue at position 56 (aspartate 56) is a 4-aspartylphosphate. In terms of domain architecture, CheB-type methylesterase spans 156–349; sequence ARPQQAIVAI…AAAIVQLIGE (194 aa). Catalysis depends on residues serine 168, histidine 195, and aspartate 291.

Belongs to the CheB family. Post-translationally, phosphorylated by CheA. Phosphorylation of the N-terminal regulatory domain activates the methylesterase activity.

The protein resides in the cytoplasm. It catalyses the reaction [protein]-L-glutamate 5-O-methyl ester + H2O = L-glutamyl-[protein] + methanol + H(+). The catalysed reaction is L-glutaminyl-[protein] + H2O = L-glutamyl-[protein] + NH4(+). Its function is as follows. Involved in chemotaxis. Part of a chemotaxis signal transduction system that modulates chemotaxis in response to various stimuli. Catalyzes the demethylation of specific methylglutamate residues introduced into the chemoreceptors (methyl-accepting chemotaxis proteins or MCP) by CheR. Also mediates the irreversible deamidation of specific glutamine residues to glutamic acid. The polypeptide is Protein-glutamate methylesterase/protein-glutamine glutaminase (Geobacillus kaustophilus (strain HTA426)).